We begin with the raw amino-acid sequence, 339 residues long: NADPH dehydrogenase (339 aa).

Pro21–Cys24 contacts FMN. A substrate-binding site is contributed by Tyr26. Positions 57 and 99 each coordinate FMN. Residue His162–His165 participates in substrate binding. Residues Arg215 and Gly307–Arg308 each bind FMN.

It belongs to the NADH:flavin oxidoreductase/NADH oxidase family. NamA subfamily. As to quaternary structure, homotetramer. It depends on FMN as a cofactor.

It carries out the reaction A + NADPH + H(+) = AH2 + NADP(+). Its function is as follows. Catalyzes the reduction of the double bond of an array of alpha,beta-unsaturated aldehydes and ketones. It also reduces the nitro group of nitroester and nitroaromatic compounds. It could have a role in detoxification processes. The protein is NADPH dehydrogenase of Clostridium acetobutylicum (strain ATCC 824 / DSM 792 / JCM 1419 / IAM 19013 / LMG 5710 / NBRC 13948 / NRRL B-527 / VKM B-1787 / 2291 / W).